The sequence spans 280 residues: Acetyl-coenzyme A carboxylase carboxyl transferase subunit beta (280 aa).

One can recognise a CoA carboxyltransferase N-terminal domain in the interval 25–280 (VMRECPICHA…RLHTKENAYG (256 aa)). Residues cysteine 29, cysteine 32, cysteine 47, and cysteine 50 each contribute to the Zn(2+) site. The C4-type zinc-finger motif lies at 29–50 (CPICHAKFLSMRLGRDHTCPKC).

This sequence belongs to the AccD/PCCB family. Acetyl-CoA carboxylase is a heterohexamer composed of biotin carboxyl carrier protein (AccB), biotin carboxylase (AccC) and two subunits each of ACCase subunit alpha (AccA) and ACCase subunit beta (AccD). Zn(2+) serves as cofactor.

It localises to the cytoplasm. It carries out the reaction N(6)-carboxybiotinyl-L-lysyl-[protein] + acetyl-CoA = N(6)-biotinyl-L-lysyl-[protein] + malonyl-CoA. Its pathway is lipid metabolism; malonyl-CoA biosynthesis; malonyl-CoA from acetyl-CoA: step 1/1. In terms of biological role, component of the acetyl coenzyme A carboxylase (ACC) complex. Biotin carboxylase (BC) catalyzes the carboxylation of biotin on its carrier protein (BCCP) and then the CO(2) group is transferred by the transcarboxylase to acetyl-CoA to form malonyl-CoA. This chain is Acetyl-coenzyme A carboxylase carboxyl transferase subunit beta, found in Lactobacillus helveticus (strain DPC 4571).